The chain runs to 853 residues: DNA mismatch repair protein MutS (853 aa).

614–621 provides a ligand contact to ATP; it reads GPNMGGKS.

This sequence belongs to the DNA mismatch repair MutS family.

In terms of biological role, this protein is involved in the repair of mismatches in DNA. It is possible that it carries out the mismatch recognition step. This protein has a weak ATPase activity. This is DNA mismatch repair protein MutS from Klebsiella pneumoniae subsp. pneumoniae (strain ATCC 700721 / MGH 78578).